The chain runs to 575 residues: Potassium-transporting ATPase potassium-binding subunit (575 aa).

A run of 12 helical transmembrane segments spans residues 4–24 (SAWG…WPVG), 61–81 (LRYA…VYAL), 133–153 (GLAV…FALI), 180–200 (LWVL…QGVI), 258–278 (LANL…CFAF), 289–309 (WAVL…VIPA), 344–364 (IDAS…AVIA), 372–392 (LGGM…GGVG), 394–414 (GLYG…LMIG), 431–451 (LISI…AVAV), 499–519 (LLGL…LAIA), and 545–565 (LLIG…LALG).

Belongs to the KdpA family. The system is composed of three essential subunits: KdpA, KdpB and KdpC.

The protein resides in the cell inner membrane. In terms of biological role, part of the high-affinity ATP-driven potassium transport (or Kdp) system, which catalyzes the hydrolysis of ATP coupled with the electrogenic transport of potassium into the cytoplasm. This subunit binds the periplasmic potassium ions and delivers the ions to the membrane domain of KdpB through an intramembrane tunnel. This chain is Potassium-transporting ATPase potassium-binding subunit, found in Variovorax paradoxus (strain S110).